Here is a 267-residue protein sequence, read N- to C-terminus: Urease accessory protein UreD (267 aa).

It belongs to the UreD family. As to quaternary structure, ureD, UreF and UreG form a complex that acts as a GTP-hydrolysis-dependent molecular chaperone, activating the urease apoprotein by helping to assemble the nickel containing metallocenter of UreC. The UreE protein probably delivers the nickel.

The protein resides in the cytoplasm. Required for maturation of urease via the functional incorporation of the urease nickel metallocenter. This Synechococcus sp. (strain JA-2-3B'a(2-13)) (Cyanobacteria bacterium Yellowstone B-Prime) protein is Urease accessory protein UreD.